Reading from the N-terminus, the 219-residue chain is Tegument protein UL14 (219 aa).

Positions 159 to 219 are disordered; sequence VHTDAPSRPG…GFARDCPDGE (61 aa). The segment covering 186–202 has biased composition (pro residues); sequence APPPETAPSPEPAPGPA.

The protein belongs to the alphaherpesvirinae HHV-1 UL14 protein family. Phosphorylated.

The protein localises to the virion tegument. Its subcellular location is the host cytoplasm. The protein resides in the host nucleus. Functionally, contributes to the nuclear transport of the viral transcriptional activator VP16 during the early phase of infection. Therefore, participates indirectly in the regulation of the immediate-early gene expression. Additionally, seems to be important for efficient nuclear targeting of capsids. In Human herpesvirus 2 (strain HG52) (HHV-2), this protein is Tegument protein UL14.